Here is a 172-residue protein sequence, read N- to C-terminus: MDLKDKIRVIQGFPKEGISFKDVTTILQEKEAFKYTIDTLVEELKDKNVDVVVGPEARGFLFGAPLAYALGAGFVPVRKKGKLPSTTISSKYELEYGSDELEMHKDSIKPGQRVVIADDLLATGGTICSVIEMIESLGGEIVSINFLIELTDLKGREKLGKYDISSLVQYDI.

Belongs to the purine/pyrimidine phosphoribosyltransferase family. In terms of assembly, homodimer.

It is found in the cytoplasm. It carries out the reaction AMP + diphosphate = 5-phospho-alpha-D-ribose 1-diphosphate + adenine. It participates in purine metabolism; AMP biosynthesis via salvage pathway; AMP from adenine: step 1/1. Its function is as follows. Catalyzes a salvage reaction resulting in the formation of AMP, that is energically less costly than de novo synthesis. The polypeptide is Adenine phosphoribosyltransferase (Clostridium tetani (strain Massachusetts / E88)).